The sequence spans 141 residues: Large ribosomal subunit protein uL11 (141 aa).

Belongs to the universal ribosomal protein uL11 family. In terms of assembly, part of the ribosomal stalk of the 50S ribosomal subunit. Interacts with L10 and the large rRNA to form the base of the stalk. L10 forms an elongated spine to which L12 dimers bind in a sequential fashion forming a multimeric L10(L12)X complex. One or more lysine residues are methylated.

Forms part of the ribosomal stalk which helps the ribosome interact with GTP-bound translation factors. This is Large ribosomal subunit protein uL11 from Nostoc sp. (strain PCC 7120 / SAG 25.82 / UTEX 2576).